The chain runs to 187 residues: Peptide deformylase 2 (187 aa).

Fe cation is bound by residues Cys-107 and His-149. Glu-150 is a catalytic residue. A Fe cation-binding site is contributed by His-153.

It belongs to the polypeptide deformylase family. Requires Fe(2+) as cofactor.

It carries out the reaction N-terminal N-formyl-L-methionyl-[peptide] + H2O = N-terminal L-methionyl-[peptide] + formate. Functionally, removes the formyl group from the N-terminal Met of newly synthesized proteins. Requires at least a dipeptide for an efficient rate of reaction. N-terminal L-methionine is a prerequisite for activity but the enzyme has broad specificity at other positions. The chain is Peptide deformylase 2 from Gloeobacter violaceus (strain ATCC 29082 / PCC 7421).